Consider the following 815-residue polypeptide: Cell division cycle protein 48 (815 aa).

The interval 1–30 (MNAPSTMTDKKPEVEHLQGENPPKDTYSAE) is disordered. The span at 8–18 (TDKKPEVEHLQ) shows a compositional bias: basic and acidic residues. ATP contacts are provided by residues 267–273 (PGTGKTL), Asn-368, His-404, and 541–546 (GTGKTL). The tract at residues 794–815 (DSADSNTNGPSFGNDGADDLYA) is disordered. Polar residues predominate over residues 795-804 (SADSNTNGPS).

This sequence belongs to the AAA ATPase family. Component of the ribosome quality control complex (RQC), composed of the E3 ubiquitin ligase rkr1/ltn1, rqc1 and mtr1/rqc2, as well as cdc48 and its ubiquitin-binding cofactors. RQC forms a stable complex with 60S ribosomal subunits. Interacts with ubx2 and ubx3. Interacts with lub1. Interacts with rbd2 (via C-terminal SHP box); the interaction is required for rbd2-mediated cleavage of sre1 and sre2.

It localises to the cytoplasm. It is found in the nucleus. The enzyme catalyses ATP + H2O = ADP + phosphate + H(+). With respect to regulation, the first ATP-binding region has low ATPase activity. The second ATP-binding region is responsible for ATPase activity. ATP binding to the first ATP-binding region induces intrinsic activity of the second ATP-binding region. While ATP binding to the first ATP-binding region appears to prevent ATP hydrolysis by the second ATP-binding region, ADP-binding to first region promotes the coordinate and cooperative ATPase cycle of the second ATP-binding region. ATP binding to the first ATP-binding region induces a conformational change, promoting the rotation of the first ATP-binding region relative to the second ATP-binding region in the hexamer. ATP-dependent chaperone which probably uses the energy provided by ATP hydrolysis to generate mechanical force to unfold substrate proteins, disassemble protein complexes, and disaggregate protein aggregates. By recruiting and promoting the degradation of ubiquitinated proteins, plays a role in the ubiquitin fusion degradation (UFD) pathway. Has a role in the endoplasmic reticulum-associated degradation (ERAD) pathway which mediates the cytoplasmic elimination of misfolded proteins exported from the ER. Involved in spindle disassembly. Component of the ribosome quality control complex (RQC), a ribosome-associated complex that mediates ubiquitination and extraction of incompletely synthesized nascent chains for proteasomal degradation. CDC48 may provide the mechanical force that dislodges the polyubiquitinated nascent peptides from the exit channel. Required for ribophagy, a process which relocalizes ribosomal particles into the vacuole for degradation in response to starvation. Has a role in substrate recognition mediating rbd2-dependent cleavage of sterol regulatory element-binding protein sre1 and sre2. The chain is Cell division cycle protein 48 from Schizosaccharomyces pombe (strain 972 / ATCC 24843) (Fission yeast).